We begin with the raw amino-acid sequence, 198 residues long: Sorcin (198 aa).

EF-hand domains lie at 29–64 (GQTQ…SGIA), 70–103 (FNLE…AVLN), 100–135 (AVLN…MGFR), and 134–169 (FRLS…LRAL). Ca(2+)-binding residues include Asp-83, Asp-85, Ser-87, Thr-89, Glu-94, Asp-113, Asp-115, Ser-117, Thr-119, and Glu-124.

In terms of assembly, homodimer. Interacts with GCA, RYR2 and ANXA7. In terms of tissue distribution, detected in cardiac myocytes.

It is found in the cytoplasm. It localises to the sarcoplasmic reticulum membrane. Calcium-binding protein that modulates excitation-contraction coupling in the heart. Contributes to calcium homeostasis in the heart sarcoplasmic reticulum. Modulates the activity of RYR2 calcium channels. The polypeptide is Sorcin (SRI) (Homo sapiens (Human)).